Reading from the N-terminus, the 98-residue chain is Cystatin-A (98 aa).

Met-1 is subject to N-acetylmethionine. The Secondary area of contact motif lies at 46-50 (QVVAG).

This sequence belongs to the cystatin family.

The protein resides in the cytoplasm. This is an intracellular thiol proteinase inhibitor. The sequence is that of Cystatin-A (CSTA) from Bos taurus (Bovine).